The chain runs to 819 residues: Hypoxia-inducible factor 1-alpha (819 aa).

The disordered stretch occupies residues M1–R31. Positions M1–A402 are interaction with TSGA10. A compositionally biased stretch (basic and acidic residues) spans G7–R31. A bHLH domain is found at R18–R71. The DNA-binding stretch occupies residues K22–R31. The PAS 1 domain maps to K86 to G159. The tract at residues R171–V192 is required for heterodimer formation with ARNT. The region spanning P229–G299 is the PAS 2 domain. Residue S248 is modified to Phosphoserine; by CK1. One can recognise a PAC domain in the interval T303–I346. The tract at residues A402–Q599 is ODD. The residue at position 403 (P403) is a 4-hydroxyproline. Over residues I495–S518 the composition is skewed to polar residues. Residues I495–C521 are disordered. Residues F532–R576 form an NTAD region. K533 carries the N6-acetyllysine; alternate modification. A Glycyl lysine isopeptide (Lys-Gly) (interchain with G-Cter in ubiquitin); alternate cross-link involves residue K533. Residues K539 and K548 each participate in a glycyl lysine isopeptide (Lys-Gly) (interchain with G-Cter in ubiquitin) cross-link. S552 carries the post-translational modification Phosphoserine; by GSK3-beta. T556 is modified (phosphothreonine; by GSK3-beta). At P565 the chain carries 4-hydroxyproline. The residue at position 577 (S577) is a Phosphoserine; by PLK3. The tract at residues S577–Q778 is ID. Residues L581–S685 are disordered. The span at S582–T613 shows a compositional bias: low complexity. Basic and acidic residues predominate over residues E614–K628. A compositionally biased stretch (low complexity) spans T632 to T655. Residue S650 is modified to Phosphoserine; by PLK3. The residue at position 702 (K702) is an N6-acetyllysine. The Nuclear localization signal signature appears at R711–H717. A CTAD region spans residues S779–N819. C793 is subject to S-nitrosocysteine. Position 796 is a (3S)-3-hydroxyasparagine (N796).

Interacts with the ARNT; forms a heterodimer that binds core DNA sequence 5'-TACGTG-3' within the hypoxia response element (HRE) of target gene promoters. Interacts with COPS5; the interaction increases the transcriptional activity of HIF1A through increased stability. Interacts with EP300 (via TAZ-type 1 domains); the interaction is stimulated in response to hypoxia and inhibited by CITED2. Interacts with CREBBP (via TAZ-type 1 domains). Interacts with NCOA1, NCOA2, APEX1 and HSP90. Interacts (hydroxylated within the ODD domain) with VHLL (via beta domain); the interaction, leads to polyubiquitination and subsequent HIF1A proteasomal degradation. During hypoxia, sumoylated HIF1A also binds VHL; the interaction promotes the ubiquitination of HIF1A. Interacts with SENP1; the interaction desumoylates HIF1A resulting in stabilization and activation of transcription. Interacts (via the ODD domain) with NAA10; the interaction appears not to acetylate HIF1A nor have any affect on protein stability, during hypoxia. Interacts with RWDD3; the interaction enhances HIF1A sumoylation. Interacts with TSGA10. Interacts with HIF3A. Interacts with RORA (via the DNA binding domain); the interaction enhances HIF1A transcription under hypoxia through increasing protein stability. Interaction with PSMA7 inhibits the transactivation activity of HIF1A under both normoxic and hypoxia-mimicking conditions. Interacts with USP20. Interacts with RACK1; promotes HIF1A ubiquitination and proteasome-mediated degradation. Interacts (via N-terminus) with USP19. Interacts with SIRT2. Interacts (deacetylated form) with EGLN1. Interacts with CBFA2T3. Interacts with HSP90AA1 and HSP90AB1. Interacts with DCUN1D1; this interaction increases the interaction between VHL and DCUN1D1. Interacts with HIF1AN. In terms of processing, S-nitrosylation of Cys-793 may be responsible for increased recruitment of p300 coactivator necessary for transcriptional activity of HIF-1 complex. Acetylation of Lys-533 by ARD1 increases interaction with VHL and stimulates subsequent proteasomal degradation. Deacetylation of Lys-702 by SIRT2 increases its interaction with and hydroxylation by EGLN1 thereby inactivating HIF1A activity by inducing its proteasomal degradation. Post-translationally, requires phosphorylation for DNA-binding. Phosphorylation at Ser-248 by CSNK1D/CK1 represses kinase activity and impairs ARNT binding. Phosphorylation by GSK3-beta and PLK3 promote degradation by the proteasome. In terms of processing, the iron and 2-oxoglutarate dependent 3-hydroxylation of asparagine is (S) stereospecific within HIF CTAD domains. Sumoylated; with SUMO1 under hypoxia. Sumoylation is enhanced through interaction with RWDD3. Both sumoylation and desumoylation seem to be involved in the regulation of its stability during hypoxia. Sumoylation can promote either its stabilization or its VHL-dependent degradation by promoting hydroxyproline-independent HIF1A-VHL complex binding, thus leading to HIF1A ubiquitination and proteasomal degradation. Desumoylation by SENP1 increases its stability amd transcriptional activity. There is a disaccord between various publications on the effect of sumoylation and desumoylation on its stability and transcriptional activity. Post-translationally, in normoxia, is hydroxylated on Pro-403 and Pro-565 in the oxygen-dependent degradation domain (ODD) by EGLN1/PHD2 and EGLN2/PHD1. EGLN3/PHD3 has also been shown to hydroxylate Pro-565. The hydroxylated prolines promote interaction with VHL, initiating rapid ubiquitination and subsequent proteasomal degradation. Deubiquitinated by USP20. Under hypoxia, proline hydroxylation is impaired and ubiquitination is attenuated, resulting in stabilization. In normoxia, is hydroxylated on Asn-796 by HIF1AN, thus abrogating interaction with CREBBP and EP300 and preventing transcriptional activation. Repressed by iron ion, via Fe(2+) prolyl hydroxylase (PHD) enzymes-mediated hydroxylation and subsequent proteasomal degradation.

Its subcellular location is the cytoplasm. It is found in the nucleus. The protein resides in the nucleus speckle. With respect to regulation, induced by reactive oxygen species (ROS). Functions as a master transcriptional regulator of the adaptive response to hypoxia. Under hypoxic conditions, activates the transcription of over 40 genes, including erythropoietin, glucose transporters, glycolytic enzymes, vascular endothelial growth factor, HILPDA, and other genes whose protein products increase oxygen delivery or facilitate metabolic adaptation to hypoxia. Plays an essential role in embryonic vascularization, tumor angiogenesis and pathophysiology of ischemic disease. Heterodimerizes with ARNT; heterodimer binds to core DNA sequence 5'-TACGTG-3' within the hypoxia response element (HRE) of target gene promoters. Activation requires recruitment of transcriptional coactivators such as CREBBP and EP300. Activity is enhanced by interaction with NCOA1 and/or NCOA2. Interaction with redox regulatory protein APEX1 seems to activate CTAD and potentiates activation by NCOA1 and CREBBP. Involved in the axonal distribution and transport of mitochondria in neurons during hypoxia. The protein is Hypoxia-inducible factor 1-alpha (HIF1A) of Eospalax fontanierii baileyi (Plateau zokor).